The following is a 413-amino-acid chain: Arginine biosynthesis bifunctional protein ArgJ, mitochondrial (413 aa).

Threonine 168, lysine 194, threonine 205, and glutamate 292 together coordinate substrate. The active-site Nucleophile is the threonine 205.

This sequence belongs to the ArgJ family. In terms of assembly, heterodimer of an alpha and a beta chain. Post-translationally, the alpha and beta chains are autoproteolytically processed from a single precursor protein within the mitochondrion.

It localises to the mitochondrion matrix. It carries out the reaction N(2)-acetyl-L-ornithine + L-glutamate = N-acetyl-L-glutamate + L-ornithine. It catalyses the reaction L-glutamate + acetyl-CoA = N-acetyl-L-glutamate + CoA + H(+). The protein operates within amino-acid biosynthesis; L-arginine biosynthesis; L-ornithine and N-acetyl-L-glutamate from L-glutamate and N(2)-acetyl-L-ornithine (cyclic): step 1/1. Its pathway is amino-acid biosynthesis; L-arginine biosynthesis; N(2)-acetyl-L-ornithine from L-glutamate: step 1/4. Catalyzes two activities which are involved in the cyclic version of arginine biosynthesis: the synthesis of acetylglutamate from glutamate and acetyl-CoA, and of ornithine by transacetylation between acetylornithine and glutamate. This chain is Arginine biosynthesis bifunctional protein ArgJ, mitochondrial, found in Clavispora lusitaniae (strain ATCC 42720) (Yeast).